The following is an 862-amino-acid chain: Taxadiene synthase (862 aa).

Mg(2+)-binding residues include Asp613, Asp617, Asn757, Thr761, and Glu765. Positions Asp613–Asp617 match the DDXXD motif motif.

This sequence belongs to the terpene synthase family. It depends on Mg(2+) as a cofactor.

It carries out the reaction (2E,6E,10E)-geranylgeranyl diphosphate = taxa-4(5),11(12)-diene + diphosphate. It functions in the pathway alkaloid biosynthesis; taxol biosynthesis; taxa-4(20),11-dien-5alpha-ol from geranylgeranyl diphosphate: step 1/2. Catalyzes the cyclization of the ubiquitous isoprenoid intermediate geranylgeranyl diphosphate to taxa-4,11-diene, the parent olefin with a taxane skeleton. This Taxus baccata (English yew) protein is Taxadiene synthase (TDC1).